A 451-amino-acid chain; its full sequence is Probable glycine dehydrogenase (decarboxylating) subunit 1 (451 aa).

It belongs to the GcvP family. N-terminal subunit subfamily. The glycine cleavage system is composed of four proteins: P, T, L and H. In this organism, the P 'protein' is a heterodimer of two subunits.

It carries out the reaction N(6)-[(R)-lipoyl]-L-lysyl-[glycine-cleavage complex H protein] + glycine + H(+) = N(6)-[(R)-S(8)-aminomethyldihydrolipoyl]-L-lysyl-[glycine-cleavage complex H protein] + CO2. Functionally, the glycine cleavage system catalyzes the degradation of glycine. The P protein binds the alpha-amino group of glycine through its pyridoxal phosphate cofactor; CO(2) is released and the remaining methylamine moiety is then transferred to the lipoamide cofactor of the H protein. In Thermococcus kodakarensis (strain ATCC BAA-918 / JCM 12380 / KOD1) (Pyrococcus kodakaraensis (strain KOD1)), this protein is Probable glycine dehydrogenase (decarboxylating) subunit 1.